We begin with the raw amino-acid sequence, 219 residues long: Thiamine-phosphate synthase (219 aa).

4-amino-2-methyl-5-(diphosphooxymethyl)pyrimidine is bound by residues 44 to 48 (QFREK) and N79. Positions 80 and 99 each coordinate Mg(2+). Residue S117 participates in 4-amino-2-methyl-5-(diphosphooxymethyl)pyrimidine binding. 143–145 (TST) is a binding site for 2-[(2R,5Z)-2-carboxy-4-methylthiazol-5(2H)-ylidene]ethyl phosphate. K146 contributes to the 4-amino-2-methyl-5-(diphosphooxymethyl)pyrimidine binding site. Residues G175 and 195-196 (IS) contribute to the 2-[(2R,5Z)-2-carboxy-4-methylthiazol-5(2H)-ylidene]ethyl phosphate site.

This sequence belongs to the thiamine-phosphate synthase family. Requires Mg(2+) as cofactor.

It catalyses the reaction 2-[(2R,5Z)-2-carboxy-4-methylthiazol-5(2H)-ylidene]ethyl phosphate + 4-amino-2-methyl-5-(diphosphooxymethyl)pyrimidine + 2 H(+) = thiamine phosphate + CO2 + diphosphate. The enzyme catalyses 2-(2-carboxy-4-methylthiazol-5-yl)ethyl phosphate + 4-amino-2-methyl-5-(diphosphooxymethyl)pyrimidine + 2 H(+) = thiamine phosphate + CO2 + diphosphate. It carries out the reaction 4-methyl-5-(2-phosphooxyethyl)-thiazole + 4-amino-2-methyl-5-(diphosphooxymethyl)pyrimidine + H(+) = thiamine phosphate + diphosphate. The protein operates within cofactor biosynthesis; thiamine diphosphate biosynthesis; thiamine phosphate from 4-amino-2-methyl-5-diphosphomethylpyrimidine and 4-methyl-5-(2-phosphoethyl)-thiazole: step 1/1. Condenses 4-methyl-5-(beta-hydroxyethyl)thiazole monophosphate (THZ-P) and 2-methyl-4-amino-5-hydroxymethyl pyrimidine pyrophosphate (HMP-PP) to form thiamine monophosphate (TMP). The chain is Thiamine-phosphate synthase from Bacillus anthracis (strain A0248).